We begin with the raw amino-acid sequence, 294 residues long: Cutinase (294 aa).

An N-terminal signal peptide occupies residues 1-33 (MLRARPSHRLASAAAVVAATGAALLAGSSPAAA). C36 and C107 are oxidised to a cystine. Catalysis depends on S118, which acts as the Nucleophile. Cysteines 180 and 187 form a disulfide. D184 is an active-site residue. H198 (proton donor/acceptor) is an active-site residue. Positions 222 to 241 (GTPTTPTPTPTPTPVPTTCV) are disordered. The segment covering 226–236 (TPTPTPTPTPV) has biased composition (pro residues). The tract at residues 240 to 294 (CVRDSTRDHVAADRAVSLYGRAYARGSRDSLGATSSYNVVSLQQVEGGWRLVTAC) is may be involved in substrate binding.

Belongs to the cutinase family.

The protein resides in the secreted. The enzyme catalyses cutin + H2O = cutin monomers.. The catalysed reaction is a tetradecanoate ester + H2O = an aliphatic alcohol + tetradecanoate + H(+). It catalyses the reaction hexadecanoate ester + H2O = an aliphatic alcohol + hexadecanoate + H(+). It carries out the reaction a butanoate ester + H2O = an aliphatic alcohol + butanoate + H(+). The enzyme catalyses an octanoate ester + H2O = an aliphatic alcohol + octanoate + H(+). Catalyzes the hydrolysis of cutin, a polyester that forms the structure of plant cuticle. Shows esterase activity towards p-nitrophenol-linked aliphatic esters (pNP-aliphatic esters). Can depolymerize synthetic polyesters such as poly(epsilon-caprolactone) (PCL) and poly(1,3-propylene adipate) (PPA). Exhibits some activity on poly(lactic acid) (PLA). Can bind but not hydrolyze poly(hydroxybutyrate) (PHB). This Kineococcus radiotolerans (strain ATCC BAA-149 / DSM 14245 / SRS30216) protein is Cutinase.